The primary structure comprises 287 residues: Bifunctional protein FolD (287 aa).

NADP(+)-binding positions include 166–168 (GAS) and Ile-232.

Belongs to the tetrahydrofolate dehydrogenase/cyclohydrolase family. In terms of assembly, homodimer.

The catalysed reaction is (6R)-5,10-methylene-5,6,7,8-tetrahydrofolate + NADP(+) = (6R)-5,10-methenyltetrahydrofolate + NADPH. It catalyses the reaction (6R)-5,10-methenyltetrahydrofolate + H2O = (6R)-10-formyltetrahydrofolate + H(+). Its pathway is one-carbon metabolism; tetrahydrofolate interconversion. Catalyzes the oxidation of 5,10-methylenetetrahydrofolate to 5,10-methenyltetrahydrofolate and then the hydrolysis of 5,10-methenyltetrahydrofolate to 10-formyltetrahydrofolate. This Aeromonas salmonicida (strain A449) protein is Bifunctional protein FolD.